A 335-amino-acid chain; its full sequence is Mesoderm-specific transcript homolog protein (335 aa).

The next 2 membrane-spanning stretches (helical) occupy residues 13-33 (WWVQ…HIPP) and 63-83 (VGVV…TSSY). Residues 71–310 (IVVLLHGFPT…PRSTVSILDD (240 aa)) enclose the AB hydrolase-1 domain. The short motif at 98–103 (RVIALD) is the RVIALD element. Asparagine 163 carries N-linked (GlcNAc...) asparagine glycosylation. The helical transmembrane segment at 266–286 (VGALASVTIPIHFIYGPLDPV) threads the bilayer.

The protein belongs to the AB hydrolase superfamily. As to expression, highly expressed in hydatidiform moles, but barely expressed in dermoid cysts. Biallelic expression is detected in blood lymphocytes. Seems to imprinted in an isoform-specific manner rather than in a tissue-specific manner in lymphocytes. Isoform 1 is expressed only from the paternal allele. Isoform 2 is expressed from both the paternal allele and the maternal allele.

The protein resides in the endoplasmic reticulum membrane. The chain is Mesoderm-specific transcript homolog protein (MEST) from Homo sapiens (Human).